We begin with the raw amino-acid sequence, 139 residues long: Holo-[acyl-carrier-protein] synthase (139 aa).

Mg(2+) contacts are provided by Asp-9 and Glu-63.

This sequence belongs to the P-Pant transferase superfamily. AcpS family. It depends on Mg(2+) as a cofactor.

Its subcellular location is the cytoplasm. It catalyses the reaction apo-[ACP] + CoA = holo-[ACP] + adenosine 3',5'-bisphosphate + H(+). Transfers the 4'-phosphopantetheine moiety from coenzyme A to a Ser of acyl-carrier-protein. The polypeptide is Holo-[acyl-carrier-protein] synthase (Wigglesworthia glossinidia brevipalpis).